A 120-amino-acid chain; its full sequence is NAD(P)H-quinone oxidoreductase subunit 3, chloroplastic (120 aa).

The next 3 membrane-spanning stretches (helical) occupy residues 10-30 (FWVF…ISGV), 64-84 (IFAL…PWAM), and 88-108 (VLGV…IVGS).

It belongs to the complex I subunit 3 family. NDH is composed of at least 16 different subunits, 5 of which are encoded in the nucleus.

Its subcellular location is the plastid. The protein resides in the chloroplast thylakoid membrane. It catalyses the reaction a plastoquinone + NADH + (n+1) H(+)(in) = a plastoquinol + NAD(+) + n H(+)(out). The catalysed reaction is a plastoquinone + NADPH + (n+1) H(+)(in) = a plastoquinol + NADP(+) + n H(+)(out). Its function is as follows. NDH shuttles electrons from NAD(P)H:plastoquinone, via FMN and iron-sulfur (Fe-S) centers, to quinones in the photosynthetic chain and possibly in a chloroplast respiratory chain. The immediate electron acceptor for the enzyme in this species is believed to be plastoquinone. Couples the redox reaction to proton translocation, and thus conserves the redox energy in a proton gradient. The chain is NAD(P)H-quinone oxidoreductase subunit 3, chloroplastic from Pelargonium hortorum (Common geranium).